Consider the following 447-residue polypeptide: Phosphoglucosamine mutase (447 aa).

The active-site Phosphoserine intermediate is the Ser-100. Ser-100, Asp-239, Asp-241, and Asp-243 together coordinate Mg(2+). Ser-100 is modified (phosphoserine).

Belongs to the phosphohexose mutase family. Mg(2+) is required as a cofactor. Post-translationally, activated by phosphorylation.

It carries out the reaction alpha-D-glucosamine 1-phosphate = D-glucosamine 6-phosphate. In terms of biological role, catalyzes the conversion of glucosamine-6-phosphate to glucosamine-1-phosphate. The protein is Phosphoglucosamine mutase of Thermoanaerobacter sp. (strain X514).